The sequence spans 528 residues: Dihydromonacolin L monooxygenase LovA (528 aa).

Residues 1 to 23 lie on the Cytoplasmic side of the membrane; that stretch reads MTVDALTQPHHLLSLAWNDTQQH. Residues 24-44 traverse the membrane as a helical; Signal-anchor for type II membrane protein segment; it reads GSWFAPLVTTSAGLLCLLLYL. Residues 45–528 lie on the Lumenal side of the membrane; the sequence is CSSGRRSDLP…DEDIRLPGSL (484 aa). Cys465 is a heme binding site.

It belongs to the cytochrome P450 family. It depends on heme as a cofactor.

The protein localises to the membrane. It localises to the endoplasmic reticulum membrane. The catalysed reaction is dihydromonacolin L carboxylate + reduced [NADPH--hemoprotein reductase] + O2 = monacolin L carboxylate + oxidized [NADPH--hemoprotein reductase] + 2 H2O + H(+). It carries out the reaction monacolin L carboxylate + reduced [NADPH--hemoprotein reductase] + O2 = monacolin J carboxylate + oxidized [NADPH--hemoprotein reductase] + H2O + H(+). It functions in the pathway polyketide biosynthesis; lovastatin biosynthesis. In terms of biological role, dihydromonacolin L monooxygenase; part of the gene cluster that mediates the biosynthesis of lovastatin (also known as mevinolin, mevacor or monacolin K), a hypolipidemic inhibitor of (3S)-hydroxymethylglutaryl-coenzyme A (HMG-CoA) reductase (HMGR). The first step in the biosynthesis of lovastatin is the production of dihydromonacolin L acid by the lovastatin nonaketide synthase lovB and the trans-acting enoyl reductase lovC via condensation of one acetyl-CoA unit and 8 malonyl-CoA units. Dihydromonacolin L acid is released from lovB by the thioesterase lovG. Next, dihydromonacolin L acid is oxidized by the dihydromonacolin L monooxygenase lovA twice to form monacolin J acid. The 2-methylbutyrate moiety of lovastatin is synthesized by the lovastatin diketide synthase lovF via condensation of one acetyl-CoA unit and one malonyl-CoA unit. Finally, the covalent attachment of this moiety to monacolin J acid is catalyzed by the transesterase lovD to yield lovastatin. LovD has broad substrate specificity and can also convert monacolin J to simvastatin using alpha-dimethylbutanoyl-S-methyl-3-mercaptopropionate (DMB-S-MMP) as the thioester acyl donor, and can also catalyze the reverse reaction and function as hydrolase in vitro. LovD has much higher activity with LovF-bound 2-methylbutanoate than with free diketide substrates. This chain is Dihydromonacolin L monooxygenase LovA, found in Aspergillus terreus.